The sequence spans 378 residues: Glutamate 5-kinase (378 aa).

An ATP-binding site is contributed by K19. Residues S60, D147, and N159 each contribute to the substrate site. ATP-binding positions include 179–180 (SD) and 221–227 (SGGMRTK). In terms of domain architecture, PUA spans 285–362 (KGTLTIDAGA…GEMEQLLGYR (78 aa)).

This sequence belongs to the glutamate 5-kinase family.

It localises to the cytoplasm. It carries out the reaction L-glutamate + ATP = L-glutamyl 5-phosphate + ADP. It participates in amino-acid biosynthesis; L-proline biosynthesis; L-glutamate 5-semialdehyde from L-glutamate: step 1/2. In terms of biological role, catalyzes the transfer of a phosphate group to glutamate to form L-glutamate 5-phosphate. The polypeptide is Glutamate 5-kinase (Gluconobacter oxydans (strain 621H) (Gluconobacter suboxydans)).